The following is a 505-amino-acid chain: ATP synthase subunit alpha, chloroplastic (505 aa).

170 to 177 (GDRQTGKT) is a binding site for ATP.

The protein belongs to the ATPase alpha/beta chains family. In terms of assembly, F-type ATPases have 2 components, CF(1) - the catalytic core - and CF(0) - the membrane proton channel. CF(1) has five subunits: alpha(3), beta(3), gamma(1), delta(1), epsilon(1). CF(0) has four main subunits: a, b, b' and c.

The protein localises to the plastid. Its subcellular location is the chloroplast thylakoid membrane. The enzyme catalyses ATP + H2O + 4 H(+)(in) = ADP + phosphate + 5 H(+)(out). Its function is as follows. Produces ATP from ADP in the presence of a proton gradient across the membrane. The alpha chain is a regulatory subunit. The protein is ATP synthase subunit alpha, chloroplastic of Oenothera elata subsp. hookeri (Hooker's evening primrose).